A 230-amino-acid chain; its full sequence is 5'-methylthioadenosine/S-adenosylhomocysteine nucleosidase (230 aa).

The active-site Proton acceptor is Glu-12. Residues Gly-78, Ile-153, and 174 to 175 (ME) each bind substrate. Catalysis depends on Asp-198, which acts as the Proton donor.

This sequence belongs to the PNP/UDP phosphorylase family. MtnN subfamily.

It catalyses the reaction S-adenosyl-L-homocysteine + H2O = S-(5-deoxy-D-ribos-5-yl)-L-homocysteine + adenine. It carries out the reaction S-methyl-5'-thioadenosine + H2O = 5-(methylsulfanyl)-D-ribose + adenine. The enzyme catalyses 5'-deoxyadenosine + H2O = 5-deoxy-D-ribose + adenine. The protein operates within amino-acid biosynthesis; L-methionine biosynthesis via salvage pathway; S-methyl-5-thio-alpha-D-ribose 1-phosphate from S-methyl-5'-thioadenosine (hydrolase route): step 1/2. In terms of biological role, catalyzes the irreversible cleavage of the glycosidic bond in both 5'-methylthioadenosine (MTA) and S-adenosylhomocysteine (SAH/AdoHcy) to adenine and the corresponding thioribose, 5'-methylthioribose and S-ribosylhomocysteine, respectively. Also cleaves 5'-deoxyadenosine, a toxic by-product of radical S-adenosylmethionine (SAM) enzymes, into 5-deoxyribose and adenine. This chain is 5'-methylthioadenosine/S-adenosylhomocysteine nucleosidase, found in Shewanella piezotolerans (strain WP3 / JCM 13877).